The following is a 769-amino-acid chain: Serine/threonine-protein kinase PLK4 (769 aa).

Residues 14–267 (YEVQHLLGKG…LEAVLCHPFM (254 aa)) form the Protein kinase domain. ATP-binding positions include 20-28 (LGKGGFATV) and K43. D138 (proton acceptor) is an active-site residue. The 118-residue stretch at 381-498 (EDRISVPPLN…ARFVGLVKSK (118 aa)) folds into the Cryptic POLO box 1 (CPB1) domain. The Cryptic POLO box 2 (CPB2) domain occupies 499 to 602 (TPKVTYFSTL…GRRPITDVQP (104 aa)). Residues 660-739 (PIKRINVPEI…IPNIQLKLKT (80 aa)) enclose the POLO box domain.

This sequence belongs to the protein kinase superfamily. Ser/Thr protein kinase family. CDC5/Polo subfamily. In terms of assembly, homodimer. Interacts with Alms1a. Ubiquitinated by the SCF-slmb ubiquitin ligase complex; leading to its degradation by the proteasome during interphase and regulating centriole number and ensuring the block to centriole reduplication. In terms of tissue distribution, expressed in testis (at protein level).

The protein resides in the cytoplasm. Its subcellular location is the cytoskeleton. The protein localises to the microtubule organizing center. It localises to the centrosome. It is found in the centriole. It catalyses the reaction L-seryl-[protein] + ATP = O-phospho-L-seryl-[protein] + ADP + H(+). The enzyme catalyses L-threonyl-[protein] + ATP = O-phospho-L-threonyl-[protein] + ADP + H(+). Serine/threonine-protein kinase that plays a central role in centriole duplication. Able to trigger procentriole formation on the surface of the mother centriole cylinder, using mother centriole as a platform, leading to the recruitment of centriole biogenesis proteins such as Sas-6. When overexpressed, it is able to induce centrosome amplification through the simultaneous generation of multiple procentrioles adjoining each parental centriole during S phase. Centrosome amplification following overexpression can initiate tumorigenesis, highlighting the importance of centrosome regulation in cancers. This is Serine/threonine-protein kinase PLK4 (SAK) from Drosophila melanogaster (Fruit fly).